The chain runs to 705 residues: Elongation factor G 2 (705 aa).

Positions 8–290 (ELYRNIGISA…AVLDYLPSPL (283 aa)) constitute a tr-type G domain. GTP is bound by residues 17 to 24 (AHIDAGKT), 88 to 92 (DTPGH), and 142 to 145 (NKMD).

Belongs to the TRAFAC class translation factor GTPase superfamily. Classic translation factor GTPase family. EF-G/EF-2 subfamily.

It localises to the cytoplasm. Catalyzes the GTP-dependent ribosomal translocation step during translation elongation. During this step, the ribosome changes from the pre-translocational (PRE) to the post-translocational (POST) state as the newly formed A-site-bound peptidyl-tRNA and P-site-bound deacylated tRNA move to the P and E sites, respectively. Catalyzes the coordinated movement of the two tRNA molecules, the mRNA and conformational changes in the ribosome. The sequence is that of Elongation factor G 2 from Bordetella avium (strain 197N).